We begin with the raw amino-acid sequence, 1468 residues long: ABC transporter G family member 34 (1468 aa).

The disordered stretch occupies residues 33 to 53 (NGAFSRSSSSSSRRMRGEEDD). Residues 178-450 (ANALGILPTR…FELMGFKCPE (273 aa)) enclose the ABC transporter 1 domain. ATP is bound at residue 211–218 (GPPGSGKT). The ABC transmembrane type-2 1 domain occupies 528-741 (ELLKANIDRE…AQNAVSVNEF (214 aa)). Transmembrane regions (helical) follow at residues 546 to 566 (FVYI…MTVF), 575 to 595 (SVAD…MIML), 634 to 654 (SPMS…VIGF), 666 to 686 (LLML…GGAA), 690 to 710 (IVAN…GGFI), and 778 to 798 (IGFG…TLAL). Positions 871-1123 (LTFEDIKYSV…ELIKYFEGIQ (253 aa)) constitute an ABC transporter 2 domain. 916–923 (GVSGAGKT) contacts ATP. The ABC transmembrane type-2 2 domain occupies 1196-1410 (IQCLACLWKQ…TLYGLIVSQY (215 aa)). A run of 7 helical transmembrane segments spans residues 1217–1237 (AIRL…FWDL), 1247–1267 (LFNA…LNGQ), 1303–1323 (FPYT…MIGF), 1330–1350 (FFWY…YGMM), 1360–1380 (VASI…GFVI), 1387–1407 (VWWR…GLIV), and 1440–1460 (FVAV…GFAI).

Belongs to the ABC transporter superfamily. ABCG family. PDR (TC 3.A.1.205) subfamily.

The protein resides in the membrane. In terms of biological role, may be a general defense protein. This chain is ABC transporter G family member 34, found in Oryza sativa subsp. japonica (Rice).